A 365-amino-acid polypeptide reads, in one-letter code: tRNA N6-adenosine threonylcarbamoyltransferase (365 aa).

Residues His-119 and His-123 each coordinate Fe cation. Substrate is bound by residues 141–145 (LVSGG), Asp-174, Gly-187, and Asn-288. Position 316 (Asp-316) interacts with Fe cation.

This sequence belongs to the KAE1 / TsaD family. It depends on Fe(2+) as a cofactor.

It localises to the cytoplasm. The enzyme catalyses L-threonylcarbamoyladenylate + adenosine(37) in tRNA = N(6)-L-threonylcarbamoyladenosine(37) in tRNA + AMP + H(+). Functionally, required for the formation of a threonylcarbamoyl group on adenosine at position 37 (t(6)A37) in tRNAs that read codons beginning with adenine. Is involved in the transfer of the threonylcarbamoyl moiety of threonylcarbamoyl-AMP (TC-AMP) to the N6 group of A37, together with TsaE and TsaB. TsaD likely plays a direct catalytic role in this reaction. The polypeptide is tRNA N6-adenosine threonylcarbamoyltransferase (Rhizobium johnstonii (strain DSM 114642 / LMG 32736 / 3841) (Rhizobium leguminosarum bv. viciae)).